The primary structure comprises 117 residues: MAWAPLLLTLLAHCTGSWANFMLTQPHSVSESPGKTVTISCTGSSGSIASNYVQWYQQRPGSAPTTVIYEDNQRPSGVPDRFSGSIDSSSNSASLTISGLKTEDEADYYCQSYDSSN.

A signal peptide spans 1-19 (MAWAPLLLTLLAHCTGSWA). Residues 20 to 44 (NFMLTQPHSVSESPGKTVTISCTGS) form a framework-1 region. Residues 20–117 (NFMLTQPHSV…YYCQSYDSSN (98 aa)) form the Ig-like domain. A disulfide bridge connects residues Cys-41 and Cys-110. The segment at 45–52 (SGSIASNY) is complementarity-determining-1. The segment at 53–69 (VQWYQQRPGSAPTTVIY) is framework-2. Residues 65 to 97 (TTVIYEDNQRPSGVPDRFSGSIDSSSNSASLTI) are disordered. Residues 70-72 (EDN) are complementarity-determining-2. The interval 73–110 (QRPSGVPDRFSGSIDSSSNSASLTISGLKTEDEADYYC) is framework-3. A compositionally biased stretch (low complexity) spans 83–97 (SGSIDSSSNSASLTI). A complementarity-determining-3 region spans residues 111–117 (QSYDSSN).

In terms of assembly, immunoglobulins are composed of two identical heavy chains and two identical light chains; disulfide-linked.

It is found in the secreted. The protein localises to the cell membrane. V region of the variable domain of immunoglobulin light chains that participates in the antigen recognition. Immunoglobulins, also known as antibodies, are membrane-bound or secreted glycoproteins produced by B lymphocytes. In the recognition phase of humoral immunity, the membrane-bound immunoglobulins serve as receptors which, upon binding of a specific antigen, trigger the clonal expansion and differentiation of B lymphocytes into immunoglobulins-secreting plasma cells. Secreted immunoglobulins mediate the effector phase of humoral immunity, which results in the elimination of bound antigens. The antigen binding site is formed by the variable domain of one heavy chain, together with that of its associated light chain. Thus, each immunoglobulin has two antigen binding sites with remarkable affinity for a particular antigen. The variable domains are assembled by a process called V-(D)-J rearrangement and can then be subjected to somatic hypermutations which, after exposure to antigen and selection, allow affinity maturation for a particular antigen. In Homo sapiens (Human), this protein is Immunoglobulin lambda variable 6-57.